The sequence spans 166 residues: Transmembrane protein 190 (166 aa).

Positions 1–21 (MVGSGISALGLLLLMQGSVDA) are cleaved as a signal peptide. Residues 22 to 81 (NGIQGFFYPWSCEGDVWDRESCGGQAAIENPNLCLRLRCCYRDGVCYHQRPDENMRRKHM) lie on the Extracellular side of the membrane. The P-type domain maps to 31 to 71 (WSCEGDVWDRESCGGQAAIENPNLCLRLRCCYRDGVCYHQR). 3 disulfides stabilise this stretch: Cys-33/Cys-61, Cys-43/Cys-60, and Cys-55/Cys-67. The chain crosses the membrane as a helical span at residues 82 to 102 (WALGWTCGSLLFLITSICLFW). Topologically, residues 103–166 (WARRQDMLHL…VSGEDTGGEE (64 aa)) are cytoplasmic. Positions 130 to 166 (LSKDRRSANKSTTVLQSPGGEVETAAAVSGEDTGGEE) are disordered.

Detected in testis and in a mixture of spermatogenic cells at various stages (testicular germ cells). Not detected in heart, brain, spleen, lung, liver, skeletal muscle and kidney.

Its subcellular location is the membrane. In Mus musculus (Mouse), this protein is Transmembrane protein 190 (Tmem190).